Here is a 484-residue protein sequence, read N- to C-terminus: Sulfoacetaldehyde dehydrogenase (484 aa).

NAD(+)-binding positions include 105–110, glycine 188, and glycine 206; that span reads LTPVTN. The Nucleophile role is filled by cysteine 239. Residues glutamate 332 and leucine 412 each coordinate NAD(+).

It belongs to the aldehyde dehydrogenase family.

The enzyme catalyses sulfoacetaldehyde + NAD(+) + CoA = sulfoacetyl-CoA + NADH + H(+). Part of a variant of the sulfo-TK pathway, a D-sulfoquinovose degradation pathway that produces sulfoacetate. Catalyzes the oxidation of sulfoacetaldehyde (SA) to sulfoacetyl-coenzyme A (sulfoacetyl-CoA). Is highly specific for NAD(+), with only residual (1%) activity with NADP(+). Cannot use acetaldehyde. This Acholeplasma sp protein is Sulfoacetaldehyde dehydrogenase.